We begin with the raw amino-acid sequence, 176 residues long: Nucleoside triphosphate/diphosphate phosphatase (176 aa).

The active-site Proton donor is the R23. Residues N87, D103, D105, D107, D120, and E123 each contribute to the Mg(2+) site.

It belongs to the Ntdp family. The cofactor is Mg(2+).

The catalysed reaction is a ribonucleoside 5'-triphosphate + H2O = a ribonucleoside 5'-diphosphate + phosphate + H(+). It carries out the reaction a ribonucleoside 5'-diphosphate + H2O = a ribonucleoside 5'-phosphate + phosphate + H(+). Functionally, has nucleoside phosphatase activity towards nucleoside triphosphates and nucleoside diphosphates. The sequence is that of Nucleoside triphosphate/diphosphate phosphatase from Bacillus pumilus (strain SAFR-032).